We begin with the raw amino-acid sequence, 335 residues long: Phospholipid scramblase 1 (335 aa).

The tract at residues Met1–Pro101 is proline-rich domain (PRD). The interval Met1–Trp102 is disordered. The Cytoplasmic segment spans residues Met1 to Lys305. A run of 6 repeats spans residues Gln23–Pro29, Gln30–Pro36, Gln37–Pro43, Gln44–Pro50, Gln51–Pro57, and Gln58–Pro64. The 7 X 7 AA tandem repeats of Q-G-P-Y-[AP]-G-P stretch occupies residues Gln23–Pro71. Residues Tyr26–Gln37 are compositionally biased toward pro residues. The segment covering Gly59–Pro72 has biased composition (pro residues). The SH3-binding 1 motif lies at Pro64–Pro72. The stretch at Gln65 to Pro71 is one 7; approximate repeat. Tyr91 carries the post-translational modification Phosphotyrosine; by ABL. Residues Pro101–Pro109 carry the SH3-binding 2 motif. At Thr178 the chain carries Phosphothreonine; by PKC/PRKCD. 4 S-palmitoyl cysteine lipidation sites follow: Cys201, Cys202, Cys205, and Cys206. The Nuclear localization signal motif lies at Gly274–Phe283. The helical transmembrane segment at Met306 to Phe322 threads the bilayer. The Extracellular portion of the chain corresponds to Glu323–Trp335.

It belongs to the phospholipid scramblase family. Forms homooligomers in the presence of calcium. Interacts with ABL. Interacts with RELT, RELL1 and RELL2. Interacts with OXSR1 in the presence of RELT. Interacts with OCLN, TOP2A and TOP2B. Interacts with TRPC1, TRPC4 and TRPC5. Interacts with ILDR1. The cofactor is Ca(2+). It depends on Mg(2+) as a cofactor. Zn(2+) serves as cofactor. In terms of processing, phosphorylated on tyrosine residues. Phosphorylated by OXSR1 in the presence of RELT. Phosphorylation at Thr-178 by PKC/PKCD increases its phospholipid scramblase activity during both cell stimulation and apoptosis. Palmitoylation is required for its phospholipid scramblase activity. Palmitoylation regulates its localization to the cell membrane or the nucleus; trafficking to the cell membrane is dependent upon palmitoylation whereas in the absence of palmitoylation, localizes to the nucleus.

It is found in the cell membrane. The protein localises to the nucleus. The protein resides in the cytoplasm. It localises to the perinuclear region. It carries out the reaction a 1,2-diacyl-sn-glycero-3-phosphocholine(in) = a 1,2-diacyl-sn-glycero-3-phosphocholine(out). The enzyme catalyses a 1,2-diacyl-sn-glycero-3-phosphoethanolamine(in) = a 1,2-diacyl-sn-glycero-3-phosphoethanolamine(out). It catalyses the reaction a 1,2-diacyl-sn-glycero-3-phospho-L-serine(in) = a 1,2-diacyl-sn-glycero-3-phospho-L-serine(out). In terms of biological role, catalyzes calcium-induced ATP-independent rapid bidirectional and non-specific distribution of phospholipids (lipid scrambling or lipid flip-flop) between the inner and outer leaflet of the plasma membrane resulting in collapse of the phospholipid asymmetry which leads to phosphatidylserine externalization on the cell surface. Mediates calcium-dependent phosphatidylserine externalization and apoptosis in neurons via its association with TRPC5. Also exhibits magnesium-dependent nuclease activity against double-stranded DNA and RNA but not single-stranded DNA and can enhance DNA decatenation mediated by TOP2A. Negatively regulates FcR-mediated phagocytosis in differentiated macrophages. May contribute to cytokine-regulated cell proliferation and differentiation. The sequence is that of Phospholipid scramblase 1 (Plscr1) from Rattus norvegicus (Rat).